The sequence spans 199 residues: Molybdenum cofactor guanylyltransferase (199 aa).

Residues 12-14 (LAG), Lys25, Asn53, Asp71, and Asp101 each bind GTP. Asp101 serves as a coordination point for Mg(2+).

The protein belongs to the MobA family. Monomer. It depends on Mg(2+) as a cofactor.

The protein localises to the cytoplasm. It catalyses the reaction Mo-molybdopterin + GTP + H(+) = Mo-molybdopterin guanine dinucleotide + diphosphate. Functionally, transfers a GMP moiety from GTP to Mo-molybdopterin (Mo-MPT) cofactor (Moco or molybdenum cofactor) to form Mo-molybdopterin guanine dinucleotide (Mo-MGD) cofactor. The protein is Molybdenum cofactor guanylyltransferase of Cupriavidus taiwanensis (strain DSM 17343 / BCRC 17206 / CCUG 44338 / CIP 107171 / LMG 19424 / R1) (Ralstonia taiwanensis (strain LMG 19424)).